The following is a 177-amino-acid chain: Large ribosomal subunit protein uL6 (177 aa).

It belongs to the universal ribosomal protein uL6 family. As to quaternary structure, part of the 50S ribosomal subunit.

This protein binds to the 23S rRNA, and is important in its secondary structure. It is located near the subunit interface in the base of the L7/L12 stalk, and near the tRNA binding site of the peptidyltransferase center. The chain is Large ribosomal subunit protein uL6 from Nitrobacter winogradskyi (strain ATCC 25391 / DSM 10237 / CIP 104748 / NCIMB 11846 / Nb-255).